The sequence spans 140 residues: Fluoride-specific ion channel FluC 2 (140 aa).

The next 4 helical transmembrane spans lie at 7–27, 45–65, 77–97, and 106–126; these read VPPL…LGAL, WATF…MVLV, PFAG…GLEI, and VLEA…GVVL. Residues G85 and T88 each coordinate Na(+).

It belongs to the fluoride channel Fluc/FEX (TC 1.A.43) family.

It is found in the cell membrane. It carries out the reaction fluoride(in) = fluoride(out). With respect to regulation, na(+) is not transported, but it plays an essential structural role and its presence is essential for fluoride channel function. In terms of biological role, fluoride-specific ion channel. Important for reducing fluoride concentration in the cell, thus reducing its toxicity. The protein is Fluoride-specific ion channel FluC 2 of Nocardia farcinica (strain IFM 10152).